A 71-amino-acid chain; its full sequence is UPF0352 protein Swoo_2786 (71 aa).

Belongs to the UPF0352 family.

The chain is UPF0352 protein Swoo_2786 from Shewanella woodyi (strain ATCC 51908 / MS32).